A 61-amino-acid polypeptide reads, in one-letter code: uncharacterized protein (61 aa).

This is an uncharacterized protein from Acidianus convivator (ABV).